The primary structure comprises 285 residues: 33 kDa chaperonin (285 aa).

2 cysteine pairs are disulfide-bonded: cysteine 228–cysteine 230 and cysteine 261–cysteine 264.

This sequence belongs to the HSP33 family. In terms of processing, under oxidizing conditions two disulfide bonds are formed involving the reactive cysteines. Under reducing conditions zinc is bound to the reactive cysteines and the protein is inactive.

The protein resides in the cytoplasm. Redox regulated molecular chaperone. Protects both thermally unfolding and oxidatively damaged proteins from irreversible aggregation. Plays an important role in the bacterial defense system toward oxidative stress. This chain is 33 kDa chaperonin, found in Hahella chejuensis (strain KCTC 2396).